The primary structure comprises 205 residues: GTP cyclohydrolase-2 (205 aa).

49–53 (RLHSE) is a binding site for GTP. 3 residues coordinate Zn(2+): Cys-54, Cys-65, and Cys-67. Residues Gln-70, 92–94 (EGR), and Thr-114 each bind GTP. Asp-126 acts as the Proton acceptor in catalysis. The active-site Nucleophile is Arg-128. 2 residues coordinate GTP: Thr-149 and Lys-154.

This sequence belongs to the GTP cyclohydrolase II family. The cofactor is Zn(2+).

The enzyme catalyses GTP + 4 H2O = 2,5-diamino-6-hydroxy-4-(5-phosphoribosylamino)-pyrimidine + formate + 2 phosphate + 3 H(+). It functions in the pathway cofactor biosynthesis; riboflavin biosynthesis; 5-amino-6-(D-ribitylamino)uracil from GTP: step 1/4. Catalyzes the conversion of GTP to 2,5-diamino-6-ribosylamino-4(3H)-pyrimidinone 5'-phosphate (DARP), formate and pyrophosphate. This Pseudomonas putida (strain ATCC 700007 / DSM 6899 / JCM 31910 / BCRC 17059 / LMG 24140 / F1) protein is GTP cyclohydrolase-2.